Here is a 346-residue protein sequence, read N- to C-terminus: Holliday junction branch migration complex subunit RuvB (346 aa).

Positions 1–183 (MTEQRIIASS…FGIVQRLEFY (183 aa)) are large ATPase domain (RuvB-L). Residues Ile-22, Arg-23, Gly-64, Lys-67, Thr-68, Thr-69, 130–132 (EDF), Arg-173, Tyr-183, and Arg-220 each bind ATP. Thr-68 contacts Mg(2+). The segment at 184-254 (SPQELTRIVS…VAQAAMQMLK (71 aa)) is small ATPAse domain (RuvB-S). Residues 257–346 (PEGFDELDRR…PGIGEPGDLF (90 aa)) are head domain (RuvB-H). DNA is bound by residues Arg-293, Arg-312, and Arg-317.

Belongs to the RuvB family. Homohexamer. Forms an RuvA(8)-RuvB(12)-Holliday junction (HJ) complex. HJ DNA is sandwiched between 2 RuvA tetramers; dsDNA enters through RuvA and exits via RuvB. An RuvB hexamer assembles on each DNA strand where it exits the tetramer. Each RuvB hexamer is contacted by two RuvA subunits (via domain III) on 2 adjacent RuvB subunits; this complex drives branch migration. In the full resolvosome a probable DNA-RuvA(4)-RuvB(12)-RuvC(2) complex forms which resolves the HJ.

It localises to the cytoplasm. The catalysed reaction is ATP + H2O = ADP + phosphate + H(+). Functionally, the RuvA-RuvB-RuvC complex processes Holliday junction (HJ) DNA during genetic recombination and DNA repair, while the RuvA-RuvB complex plays an important role in the rescue of blocked DNA replication forks via replication fork reversal (RFR). RuvA specifically binds to HJ cruciform DNA, conferring on it an open structure. The RuvB hexamer acts as an ATP-dependent pump, pulling dsDNA into and through the RuvAB complex. RuvB forms 2 homohexamers on either side of HJ DNA bound by 1 or 2 RuvA tetramers; 4 subunits per hexamer contact DNA at a time. Coordinated motions by a converter formed by DNA-disengaged RuvB subunits stimulates ATP hydrolysis and nucleotide exchange. Immobilization of the converter enables RuvB to convert the ATP-contained energy into a lever motion, pulling 2 nucleotides of DNA out of the RuvA tetramer per ATP hydrolyzed, thus driving DNA branch migration. The RuvB motors rotate together with the DNA substrate, which together with the progressing nucleotide cycle form the mechanistic basis for DNA recombination by continuous HJ branch migration. Branch migration allows RuvC to scan DNA until it finds its consensus sequence, where it cleaves and resolves cruciform DNA. The chain is Holliday junction branch migration complex subunit RuvB from Xanthomonas euvesicatoria pv. vesicatoria (strain 85-10) (Xanthomonas campestris pv. vesicatoria).